A 268-amino-acid polypeptide reads, in one-letter code: Transcription initiation factor TFIID subunit 14b (268 aa).

A compositionally biased stretch (polar residues) spans 1-20; the sequence is MTNSSSSKKQAQDQPETSEP. A disordered region spans residues 1-36; sequence MTNSSSSKKQAQDQPETSEPTLKSLKTKMTKSDEKQ. Residues 38–182 enclose the YEATS domain; the sequence is KLKDIEISVP…ESFLARVQNH (145 aa). Positions 229 to 263 form a coiled coil; sequence DELLQLAAARQQVQAHIAKLRRQISLLEGQNQTVK.

It belongs to the YAF9 family. In terms of assembly, component of the TFIID complex. TFIID is composed of TATA binding protein (TBP) and a number of TBP-associated factors (TAFs) whose MWs range from 14-217 kDa. Interacts with TAF1, TAF4B and TAF12B. Component of the SWR1 chromatin-remodeling complex. Interacts with FLX, a component of the transcription activator complex FRI-C. Interacts with SWC4, and with EAF1A and EAF1B (via HSA domain). As to expression, expressed in roots, leaves, inflorescence and flowering tissues.

It is found in the cytoplasm. The protein localises to the nucleus. Negative regulator of flowering controlling the H4K5 acetylation levels in the FLC and FT chromatin. Positively regulates FLC expression. Component of the transcription factor IID (TFIID) complex that is essential for mediating regulation of RNA polymerase transcription. Component of the SWR1 complex which mediates the ATP-dependent exchange of histone H2A for the H2A variant HZT1 leading to transcriptional regulation of selected genes by chromatin remodeling. Component of a NuA4 histone acetyltransferase complex which is involved in transcriptional activation of selected genes principally by acetylation of nucleosomal histones H4 and H2A. The protein is Transcription initiation factor TFIID subunit 14b of Arabidopsis thaliana (Mouse-ear cress).